Consider the following 68-residue polypeptide: Conotoxin VnMMSK-01 (68 aa).

The signal sequence occupies residues 1–20 (MMSKLGVLLTICLLLFPLTA). Residues 21 to 50 (VPMDGDQPADLPALRTQDFEPERSPWFDPV) constitute a propeptide that is removed on maturation. 3 cysteine pairs are disulfide-bonded: cysteine 53-cysteine 65, cysteine 54-cysteine 61, and cysteine 58-cysteine 64. Proline 63 carries the post-translational modification 4-hydroxyproline.

The protein belongs to the conotoxin M superfamily. As to expression, expressed by the venom duct.

It localises to the secreted. This chain is Conotoxin VnMMSK-01, found in Conus ventricosus (Mediterranean cone).